A 225-amino-acid polypeptide reads, in one-letter code: Probable GTP-binding protein EngB (225 aa).

The EngB-type G domain occupies 31–204 (VGVEIAFAGR…LGILDSWCKP (174 aa)). GTP-binding positions include 39 to 46 (GRSNAGKS), 65 to 69 (GRTQL), 83 to 86 (DLPG), 150 to 153 (TKAD), and 183 to 185 (FSS). Residues Ser-46 and Thr-67 each coordinate Mg(2+).

It belongs to the TRAFAC class TrmE-Era-EngA-EngB-Septin-like GTPase superfamily. EngB GTPase family. Mg(2+) serves as cofactor.

Necessary for normal cell division and for the maintenance of normal septation. The chain is Probable GTP-binding protein EngB from Shewanella pealeana (strain ATCC 700345 / ANG-SQ1).